The chain runs to 531 residues: Glucose-6-phosphate exchanger SLC37A1 (531 aa).

A helical membrane pass occupies residues 18 to 38; that stretch reads QWYRAFIFMLTFLLYASFHLS. The disordered stretch occupies residues 53 to 72; sequence CTAGDGPESPFSDPSSSTRH. 11 helical membrane-spanning segments follow: residues 100–120, 129–149, 157–177, 192–214, 222–242, 332–352, 364–384, 392–412, 419–439, 464–484, and 488–508; these read GALD…SGII, YLTF…LGYF, FYVV…PSVV, IMGI…AGYW, SFIV…LFLI, LCLL…PLYI, GELS…AGVI, ASTC…FSSV, ATIA…ALIT, AIID…AGLI, and GWSN…LFLV.

The protein belongs to the major facilitator superfamily. Organophosphate:Pi antiporter (OPA) (TC 2.A.1.4) family.

It localises to the endoplasmic reticulum membrane. The catalysed reaction is D-glucose 6-phosphate(in) + phosphate(out) = D-glucose 6-phosphate(out) + phosphate(in). Inhibited by vanadate but not by chlorogenic acid. Its function is as follows. Inorganic phosphate and glucose-6-phosphate antiporter. May transport cytoplasmic glucose-6-phosphate into the lumen of the endoplasmic reticulum and translocate inorganic phosphate into the opposite direction. Independent of a lumenal glucose-6-phosphatase. May not play a role in homeostatic regulation of blood glucose levels. The protein is Glucose-6-phosphate exchanger SLC37A1 of Mus musculus (Mouse).